The chain runs to 467 residues: Glutamate--tRNA ligase (467 aa).

The 'HIGH' region motif lies at 9–19 (PSPTGFLHIGG). The 'KMSKS' region signature appears at 250–254 (KLSKR). K253 lines the ATP pocket.

The protein belongs to the class-I aminoacyl-tRNA synthetase family. Glutamate--tRNA ligase type 1 subfamily. As to quaternary structure, monomer.

It is found in the cytoplasm. The enzyme catalyses tRNA(Glu) + L-glutamate + ATP = L-glutamyl-tRNA(Glu) + AMP + diphosphate. Catalyzes the attachment of glutamate to tRNA(Glu) in a two-step reaction: glutamate is first activated by ATP to form Glu-AMP and then transferred to the acceptor end of tRNA(Glu). The protein is Glutamate--tRNA ligase of Mesomycoplasma hyopneumoniae (strain 232) (Mycoplasma hyopneumoniae).